Reading from the N-terminus, the 1982-residue chain is Ras guanine nucleotide exchange factor V (1982 aa).

LRR repeat units follow at residues 1-26 (MGNI…SLEG), 47-68 (LTQL…ITNL), 69-94 (SNLS…PFKP), 105-128 (NENL…VFVL), 130-151 (NLKQ…LCGG), 164-187 (ACQL…IGDQ), 188-210 (LTTL…SFSN), 212-234 (VSLT…LCTL), 236-257 (KLVH…HTLG), 261-284 (LPSL…ILEI), 286-307 (SLRV…IGNL), 308-330 (LNLN…IGEL), 331-352 (INLR…EFSK), 354-376 (SKLN…LHSL), and 378-399 (QLLR…LIKS). Residues 1-1831 (MGNINSICLN…IANAFYELRN (1831 aa)) lie on the Extracellular side of the membrane. Disordered regions lie at residues 414 to 436 (YGST…STHG), 457 to 532 (NQIN…NKKQ), and 615 to 654 (NNSG…RRGS). 2 stretches are compositionally biased toward low complexity: residues 415-436 (GSTM…STHG) and 457-495 (NQIN…TPNG). One copy of the LRR 16 repeat lies at 443 to 466 (DILLSSVTLNNSILNQINNNNNNN). The span at 506 to 520 (LTISRSLFRGNSSNL) shows a compositional bias: polar residues. Residues 515–567 (GNSSNLESEKEDFINKKQQQQQQQQQQQQQQQQQQQQQQQQQQQQQQQQQQLG) adopt a coiled-coil conformation. One copy of the LRR 17 repeat lies at 592 to 615 (EDDIQKMQLGLEALSNLETSIGSN). Residues 616-642 (NSGGGDSMNGSGGNINNSGGSGSGCGT) show a composition bias toward gly residues. 2 LRR repeats span residues 657-684 (LPPT…VMSG) and 773-796 (HSNL…LSSS). Disordered regions lie at residues 756–778 (QSST…NLSQ) and 807–829 (LQFQ…SNQP). The GBD/FH3 domain occupies 832-1236 (TIVPSFSKFK…QIKYSIDRYG (405 aa)). 4 LRR repeats span residues 979–1003 (LLGI…GYCL), 1075–1100 (SPYV…VFKI), 1239–1263 (VPAI…RWVD), and 1689–1712 (VQNM…FVDL). Residues 1595-1717 (KDRRVSSVTL…LFVDLSTKSY (123 aa)) form the N-terminal Ras-GEF domain. Positions 1747-1974 (DEIEIARQLS…YEMSLSAEPR (228 aa)) constitute a Ras-GEF domain. The helical transmembrane segment at 1832–1848 (YHLLMAIISGLNASPVL) threads the bilayer. Residues 1849–1982 (RLKYTKGKLS…PRNAERYDIQ (134 aa)) are Cytoplasmic-facing. 2 LRR repeats span residues 1865-1888 (LDTL…LAAA) and 1917-1941 (RINF…LFPY).

Its subcellular location is the membrane. Its function is as follows. Promotes the exchange of Ras-bound GDP by GTP. This Dictyostelium discoideum (Social amoeba) protein is Ras guanine nucleotide exchange factor V (gefV).